The following is a 1158-amino-acid chain: Type IV pilus biogenesis factor PilY1 (1158 aa).

An N-terminal signal peptide occupies residues 1-29 (MIHQITRAGKSLLAAGCTLSILFASDSYA). Residues Asp-841, Asn-843, Asp-845, Ile-847, and Asp-849 each contribute to the Ca(2+) site.

This sequence belongs to the PilY1 family.

The protein localises to the fimbrium. It is found in the membrane. Its subcellular location is the cytoplasm. It localises to the cytosol. Functionally, involved in pilus assembly, twitching motility and adhesion to host cells. Primes type IV pili (T4P) assembly and is required for inclusion of minor pilins PilV, PilW and PilX to the surface pili. Stabilizes assembled pilus fibers likely by antagonizing retraction mediated by PilT. Calcium-binding and calcium release by PilY1 seem to be essential for twitching motility and for regulation of pilus retraction dynamics of PilT. Regulates surface-activated virulence possibly by acting as a surface-attachment mechanosensor. In Pseudomonas aeruginosa (strain UCBPP-PA14), this protein is Type IV pilus biogenesis factor PilY1.